A 136-amino-acid chain; its full sequence is Large ribosomal subunit protein uL16 (136 aa).

Belongs to the universal ribosomal protein uL16 family. In terms of assembly, part of the 50S ribosomal subunit.

Its function is as follows. Binds 23S rRNA and is also seen to make contacts with the A and possibly P site tRNAs. The sequence is that of Large ribosomal subunit protein uL16 from Shewanella halifaxensis (strain HAW-EB4).